We begin with the raw amino-acid sequence, 176 residues long: HTH-type transcriptional regulator DctR (176 aa).

An HTH luxR-type domain is found at 109 to 174 (VPEANVSLSR…ELVRHQHIDY (66 aa)). The segment at residues 133-152 (TEDILEKLKISLKTFYCHKH) is a DNA-binding region (H-T-H motif).

May act as a transcriptional regulator of dctA. Could be involved in the regulation of the genes coding for the type III secretion system in enterohaemorragic strains. This is HTH-type transcriptional regulator DctR (dctR) from Escherichia coli O157:H7.